The following is a 102-amino-acid chain: Glutaredoxin 1 (102 aa).

Positions 1 to 96 (MNKAILHTII…KLLENQPKTT (96 aa)) constitute a Glutaredoxin domain. An intrachain disulfide couples Cys-17 to Cys-20.

Belongs to the glutaredoxin family. As to quaternary structure, monomer.

It is found in the cytoplasm. In terms of biological role, has a glutathione-disulfide oxidoreductase activity in the presence of NADPH and glutathione reductase. Reduces low molecular weight disulfides and proteins. The chain is Glutaredoxin 1 (grxC1) from Rickettsia conorii (strain ATCC VR-613 / Malish 7).